The sequence spans 251 residues: Triosephosphate isomerase (251 aa).

9–11 (NWK) provides a ligand contact to substrate. The active-site Electrophile is histidine 95. Glutamate 167 acts as the Proton acceptor in catalysis. Residues glycine 173, serine 212, and 233-234 (GG) each bind substrate.

Belongs to the triosephosphate isomerase family. In terms of assembly, homodimer.

The protein localises to the cytoplasm. The enzyme catalyses D-glyceraldehyde 3-phosphate = dihydroxyacetone phosphate. The protein operates within carbohydrate biosynthesis; gluconeogenesis. Its pathway is carbohydrate degradation; glycolysis; D-glyceraldehyde 3-phosphate from glycerone phosphate: step 1/1. Involved in the gluconeogenesis. Catalyzes stereospecifically the conversion of dihydroxyacetone phosphate (DHAP) to D-glyceraldehyde-3-phosphate (G3P). This is Triosephosphate isomerase from Pseudomonas putida (strain ATCC 700007 / DSM 6899 / JCM 31910 / BCRC 17059 / LMG 24140 / F1).